Here is a 580-residue protein sequence, read N- to C-terminus: E3 ubiquitin-protein ligase TRIM45 (580 aa).

An RING-type zinc finger spans residues 29-98 (CPLCLGLFKA…QIGILCPVCD (70 aa)). 2 B box-type zinc fingers span residues 130–176 (GQGL…MVDL) and 186–227 (GKPI…CDFT). The Zn(2+) site is built by cysteine 135, cysteine 138, cysteine 158, histidine 162, cysteine 191, histidine 194, cysteine 214, and histidine 219. A coiled-coil region spans residues 281-335 (SEGYIKAIEEHRDKLLKQLEDIRAQKENSLQLQKAQLEQLLADMRTGVEFTEHLL). A Filamin repeat occupies 394-497 (TKEVDPAKCV…VQGSPFTVMV (104 aa)).

The protein belongs to the TRIM/RBCC family. As to expression, expressed in skeletal muscle, brain, heart and pancreas.

The protein localises to the cytoplasm. It localises to the nucleus. It carries out the reaction S-ubiquitinyl-[E2 ubiquitin-conjugating enzyme]-L-cysteine + [acceptor protein]-L-lysine = [E2 ubiquitin-conjugating enzyme]-L-cysteine + N(6)-ubiquitinyl-[acceptor protein]-L-lysine.. Its function is as follows. E3 ubiquitin-protein ligase that plays a role in the regulation of inflammatory response. Mechanistically, mediates the 'Lys-48'-linked polyubiquitination of TAB2, a regulatory protein of the kinase TAK1, leading to its degradation via the proteasomal pathway and inhibition of the TLR-mediated inflammatory immune response. May act as a transcriptional repressor in mitogen-activated protein kinase signaling pathway. This Homo sapiens (Human) protein is E3 ubiquitin-protein ligase TRIM45 (TRIM45).